Consider the following 322-residue polypeptide: Peroxisomal adenine nucleotide carrier 1 (322 aa).

3 Solcar repeats span residues Leu-5–Val-94, Ile-104–His-184, and Leu-202–Thr-298. A run of 6 helical transmembrane segments spans residues Val-8–Leu-28, Ile-104–Ile-124, Phe-158–Phe-178, Val-201–Leu-221, Ile-254–Leu-274, and Ala-286–Ile-306.

This sequence belongs to the mitochondrial carrier (TC 2.A.29) family. In terms of tissue distribution, expressed in stamens, pollen grains, seeds, leaves, cotyledons, roots, stems, flowers, hypocotyls and siliques.

The protein localises to the peroxisome membrane. Peroxisomal adenine nucleotide transporter catalyzing the counterexchange of ATP with AMP. ATP is needed by reactions that generate acyl-CoA for peroxisomal fatty acid beta-oxidation during postgerminative growth. Required for the beta-oxidation reactions involved in auxin biosynthesis and for the conversion of seed-reserved triacylglycerols into sucrose that is necessary for growth before the onset of photosynthesis. In Arabidopsis thaliana (Mouse-ear cress), this protein is Peroxisomal adenine nucleotide carrier 1 (PNC1).